The sequence spans 299 residues: Probable lipid kinase YegS (299 aa).

The 132-residue stretch at alanine 2–threonine 133 folds into the DAGKc domain. ATP is bound by residues threonine 40, glycine 66–glutamate 72, and threonine 95. Positions 215, 218, and 220 each coordinate Mg(2+). Glutamate 271 serves as the catalytic Proton acceptor.

The protein belongs to the diacylglycerol/lipid kinase family. YegS lipid kinase subfamily. Mg(2+) is required as a cofactor. The cofactor is Ca(2+).

It is found in the cytoplasm. Probably phosphorylates lipids; the in vivo substrate is unknown. The chain is Probable lipid kinase YegS from Shigella dysenteriae serotype 1 (strain Sd197).